The chain runs to 801 residues: Na(+)/H(+) antiporter subunit A1 (801 aa).

A run of 19 helical transmembrane segments spans residues 1-21 (MSLL…IPIL), 28-48 (IHLG…MLTL), 79-99 (LGLL…LYSI), 117-137 (LFMG…LYLF), 166-186 (LIIT…LAIP), 206-226 (PFFI…SAQF), 265-285 (IFAA…ITLF), 300-320 (ILAF…GIGA), 337-357 (FTAA…LFMI), 373-393 (LGGL…TALS), 427-447 (LGYL…VYSI), 472-492 (ILML…GLFP), 522-542 (GLTP…LLIV), 591-611 (LVII…SVPF), 623-643 (IFEV…LFAK), 646-666 (LFSI…FIFF), 671-691 (LALT…LCFY), 707-727 (LTNA…GLIA), and 764-784 (MDTL…YTMI).

This sequence belongs to the CPA3 antiporters (TC 2.A.63) subunit A family. May form a heterooligomeric complex that consists of seven subunits: mnhA1, mnhB1, mnhC1, mnhD1, mnhE1, mnhF1 and mnhG1.

The protein resides in the cell membrane. Mnh complex is a Na(+)/H(+) antiporter involved in Na(+) excretion. This Staphylococcus aureus (strain Mu3 / ATCC 700698) protein is Na(+)/H(+) antiporter subunit A1 (mnhA1).